Reading from the N-terminus, the 304-residue chain is UDP-3-O-acyl-N-acetylglucosamine deacetylase (304 aa).

3 residues coordinate Zn(2+): His78, His237, and Asp241. Catalysis depends on His264, which acts as the Proton donor.

It belongs to the LpxC family. It depends on Zn(2+) as a cofactor.

It catalyses the reaction a UDP-3-O-[(3R)-3-hydroxyacyl]-N-acetyl-alpha-D-glucosamine + H2O = a UDP-3-O-[(3R)-3-hydroxyacyl]-alpha-D-glucosamine + acetate. Its pathway is glycolipid biosynthesis; lipid IV(A) biosynthesis; lipid IV(A) from (3R)-3-hydroxytetradecanoyl-[acyl-carrier-protein] and UDP-N-acetyl-alpha-D-glucosamine: step 2/6. Its function is as follows. Catalyzes the hydrolysis of UDP-3-O-myristoyl-N-acetylglucosamine to form UDP-3-O-myristoylglucosamine and acetate, the committed step in lipid A biosynthesis. This Xylella fastidiosa (strain 9a5c) protein is UDP-3-O-acyl-N-acetylglucosamine deacetylase.